An 820-amino-acid polypeptide reads, in one-letter code: Leucine--tRNA ligase (820 aa).

Positions 42 to 52 (PYPSGDLHMGH) match the 'HIGH' region motif. A 'KMSKS' region motif is present at residues 576–580 (KMSKS). Lys579 contacts ATP.

It belongs to the class-I aminoacyl-tRNA synthetase family.

The protein resides in the cytoplasm. The enzyme catalyses tRNA(Leu) + L-leucine + ATP = L-leucyl-tRNA(Leu) + AMP + diphosphate. The sequence is that of Leucine--tRNA ligase from Coxiella burnetii (strain CbuK_Q154) (Coxiella burnetii (strain Q154)).